The primary structure comprises 487 residues: 1-hydroxycarotenoid 3,4-desaturase (487 aa).

FAD-binding positions include Gly12, Glu31, Lys39, 55 to 56 (SL), Val247, Asn275, Leu431, Gly461, and 468 to 469 (GI).

The protein belongs to the carotenoid/retinoid oxidoreductase family. In terms of assembly, monomer.

The catalysed reaction is rhodopin + A = (3E)-3,4-didehydrorhodopin + AH2. It catalyses the reaction 1'-hydroxy-gamma-carotene + A = 1'-hydroxytorulene + AH2. The enzyme catalyses 1-hydroxy-all-trans-1,2-dihydro-neurosporene + A = demethylspheroidene + AH2. It carries out the reaction 1,1'-dihydroxy-1,1',2,2'-tetrahydroneurosporene + A = 1'-hydroxy-demethylspheroidene + AH2. The catalysed reaction is 1,1'-dihydroxy-1,1',2,2'-tetrahydrolycopene + A = 1,1'-dihydroxy-3,4-didehydro-1,2-dihydrolycopene + AH2. The protein operates within carotenoid biosynthesis. Catalyzes the introduction of a C-3,4 double bond into 1'-hydroxy-gamma-carotene and rhodopin (1-hydroxylycopene) to yield 1'-hydroxytorulene and (3E)-3,4-didehydrorhodopin, respectively. Can also use 1-hydroxy-all-trans-1,2-dihydro-neurosporene, 1,1'-dihydroxy-1,1',2,2'-tetrahydroneurosporene and 1,1'-dihydroxy-1,1',2,2'-tetrahydrolycopene. Probably involved in the synthesis of myxol, a gamma-carotene derivative. May use FAD as a proton acceptor. The sequence is that of 1-hydroxycarotenoid 3,4-desaturase from Nonlabens dokdonensis (strain DSM 17205 / KCTC 12402 / DSW-6) (Donghaeana dokdonensis).